The primary structure comprises 704 residues: Probable ferric reduction oxidase 1 (704 aa).

The Cytoplasmic segment spans residues 1 to 16 (MGVGEMNKEVIDKVIK). The chain crosses the membrane as a helical span at residues 17–36 (FLMMVILMGTIVIWIMMPTS). The Lumenal segment spans residues 37 to 62 (TYKEIWLTSMRAKLGKSIYYGRPGVN). Residues 63–81 (LLVYMFPMILLAFLGCIYL) form a helical membrane-spanning segment. The Cytoplasmic segment spans residues 82 to 115 (HLKKSTTVNQFNSGVEKKRAKFGALRRPMLVNGP). The chain crosses the membrane as a helical span at residues 116 to 139 (LGIVTVTEVMFLTMFMALLLWSLA). Over 140-207 (NYMYRTFVNV…VGLTSESSIK (68 aa)) the chain is Lumenal. The Ferric oxidoreductase domain maps to 174–294 (GIVGNICLAF…YLYIVFMLFF (121 aa)). Residues 208-231 (YHIWLGHLVMIIFTSHGLCYFIYW) form a helical membrane-spanning segment. Heme is bound by residues His209 and His223. Residues 232-282 (ISKNQLVSKMLEWDRTAVSNLAGEIALVAGLMMWVTTYPKIRRRLFEVFFY) are Cytoplasmic-facing. The helical transmembrane segment at 283 to 307 (SHYLYIVFMLFFVFHVGISHALIPL) threads the bilayer. Heme contacts are provided by His284 and His297. Residues 308–329 (PGFYIFLVDRFLRFLQSRNNVK) lie on the Lumenal side of the membrane. The FAD-binding FR-type domain maps to 323–430 (QSRNNVKLVS…EGPYGPSSTD (108 aa)). A helical membrane pass occupies residues 330 to 350 (LVSARVLPCDTVELNFSKNPM). The Cytoplasmic portion of the chain corresponds to 351-550 (LMYSPTSTMF…PISPILGPNS (200 aa)). 372 to 375 (HPFT) lines the FAD pocket. An NAD(+)-binding site is contributed by 422–425 (GPYG). The helical transmembrane segment at 551–573 (WLCLAAILSSSFMIFIVIIAIIT) threads the bilayer. At 574-592 (RYHIHPIDQNSEKYTWAYK) the chain is on the lumenal side. Residues 593 to 614 (SLIYLVSISITVVTTSTAAMLW) form a helical membrane-spanning segment. Topologically, residues 615–704 (NKKKYYAKND…LHFESISFSW (90 aa)) are cytoplasmic.

The protein belongs to the ferric reductase (FRE) family. The cofactor is FAD. In terms of tissue distribution, expressed in siliques. Detected in roots.

Its subcellular location is the membrane. The catalysed reaction is 2 a Fe(II)-siderophore + NAD(+) + H(+) = 2 a Fe(III)-siderophore + NADH. Ferric chelate reductase involved in iron reduction in roots. May participate in the transport of electrons to a Fe(3+) ion via FAD and heme intermediates. This Arabidopsis thaliana (Mouse-ear cress) protein is Probable ferric reduction oxidase 1 (FRO1).